The primary structure comprises 68 residues: Large ribosomal subunit protein uL29c (68 aa).

This sequence belongs to the universal ribosomal protein uL29 family.

Its subcellular location is the plastid. It is found in the chloroplast. This Pyropia yezoensis (Susabi-nori) protein is Large ribosomal subunit protein uL29c.